Here is a 151-residue protein sequence, read N- to C-terminus: Methylated-DNA--protein-cysteine methyltransferase (151 aa).

The Nucleophile; methyl group acceptor role is filled by Cys119.

Belongs to the MGMT family.

It is found in the cytoplasm. It carries out the reaction a 6-O-methyl-2'-deoxyguanosine in DNA + L-cysteinyl-[protein] = S-methyl-L-cysteinyl-[protein] + a 2'-deoxyguanosine in DNA. The enzyme catalyses a 4-O-methyl-thymidine in DNA + L-cysteinyl-[protein] = a thymidine in DNA + S-methyl-L-cysteinyl-[protein]. Functionally, involved in the cellular defense against the biological effects of O6-methylguanine (O6-MeG) and O4-methylthymine (O4-MeT) in DNA. Repairs the methylated nucleobase in DNA by stoichiometrically transferring the methyl group to a cysteine residue in the enzyme. This is a suicide reaction: the enzyme is irreversibly inactivated. In Saccharolobus islandicus (strain Y.N.15.51 / Yellowstone #2) (Sulfolobus islandicus), this protein is Methylated-DNA--protein-cysteine methyltransferase.